A 311-amino-acid polypeptide reads, in one-letter code: Serine/threonine-protein phosphatase PP1-1 (311 aa).

Asp-53, His-55, Asp-82, and Asn-114 together coordinate Mn(2+). His-115 acts as the Proton donor in catalysis. 2 residues coordinate Mn(2+): His-164 and His-238.

It belongs to the PPP phosphatase family. PP-6 (PP-V) subfamily. Inactivated in a complex with phosphatase methylesterase PPE1 (PP2Ai). Interacts with phosphatase 2A activator RRD1, which can reactivate PP2Ai by dissociating the catalytic subunit from the complex. Forms a ternary complex with RRD1-TAP42. Mn(2+) is required as a cofactor.

The protein resides in the cytoplasm. It catalyses the reaction O-phospho-L-seryl-[protein] + H2O = L-seryl-[protein] + phosphate. It carries out the reaction O-phospho-L-threonyl-[protein] + H2O = L-threonyl-[protein] + phosphate. Its function is as follows. Involved in the dephosphorylation of the large subunit of RNA polymerase II. Is required in late G1 for normal G1 cyclin expression, bud initiation and expression of certain genes that are periodically expressed during late G1. Associates with the SAP proteins in a cell cycle-dependent manner. In Saccharomyces cerevisiae (strain ATCC 204508 / S288c) (Baker's yeast), this protein is Serine/threonine-protein phosphatase PP1-1 (SIT4).